The following is a 166-amino-acid chain: Early E3 18.5 kDa glycoprotein (166 aa).

The N-terminal stretch at 1 to 19 is a signal peptide; it reads MGPILVLLVLLSLLEAGSA. Residues 20-131 lie on the Lumenal side of the membrane; sequence NYDPCLDFDP…SKDNIVTFSI (112 aa). N-linked (GlcNAc...) asparagine; by host glycosylation occurs at Asn31. Intrachain disulfides connect Cys32–Cys50 and Cys44–Cys106. N-linked (GlcNAc...) asparagine; by host glycans are attached at residues Asn63, Asn67, and Asn97. Residues 132–152 traverse the membrane as a helical segment; that stretch reads AYCLCACLLTALLCVCIHLLV. Topologically, residues 153–166 are cytoplasmic; the sequence is TTRIKNANNKEKMP. The Di-lysine motif motif lies at 162–166; it reads KEKMP.

This sequence belongs to the adenoviridae E19 family. Both disulfide bonds are absolutely critical for the interaction with MHC antigens. Post-translationally, N-glycosylated; high-mannose.

It localises to the host endoplasmic reticulum membrane. Its function is as follows. Binds and retains class I heavy chains in the endoplasmic reticulum during the early period of virus infection, thereby impairing their transport to the cell surface. Also delays the expression of class I alleles that it cannot affect by direct retention. Binds transporters associated with antigen processing (TAP) and acts as a tapasin inhibitor, preventing class I/TAP association. In consequence, infected cells are masked for immune recognition by cytotoxic T-lymphocytes. The sequence is that of Early E3 18.5 kDa glycoprotein from Human adenovirus B serotype 11 (strain BC34) (HAdV-11).